Consider the following 323-residue polypeptide: Fructose-1,6-bisphosphatase class 1 (323 aa).

Residues Glu88, Asp107, Leu109, and Asp110 each contribute to the Mg(2+) site. Residues 110–113 (DGSS) and Asn200 contribute to the substrate site. Glu272 contacts Mg(2+).

This sequence belongs to the FBPase class 1 family. In terms of assembly, homotetramer. The cofactor is Mg(2+).

Its subcellular location is the cytoplasm. It catalyses the reaction beta-D-fructose 1,6-bisphosphate + H2O = beta-D-fructose 6-phosphate + phosphate. It functions in the pathway carbohydrate biosynthesis; gluconeogenesis. The polypeptide is Fructose-1,6-bisphosphatase class 1 (Acinetobacter baumannii (strain ACICU)).